The following is a 1016-amino-acid chain: Enhancer of polycomb-like protein 1 (1016 aa).

Disordered stretches follow at residues 1 to 50, 96 to 119, 450 to 488, 499 to 518, and 842 to 1016; these read MAIH…NDLE, LLGSQNEDGDKKKDDSDKKTDASV, KEEDEDKESSKIKRDKRSRFDSSREGSATSMPGSATIGT, GQVHHTQEASSSSQPYVKLP, and ARMR…PNRK. Residues 35–50 show a composition bias toward polar residues; sequence YKQSDLPTLNASNDLE. 2 stretches are compositionally biased toward basic and acidic residues: residues 103-116 and 457-473; these read DGDKKKDDSDKKTD and ESSKIKRDKRSRFDSSR. The span at 475–488 shows a compositional bias: polar residues; it reads GSATSMPGSATIGT. Residues 842-883 show a composition bias toward low complexity; the sequence is ARMRTLQQQQRNNKQQAAGQSSGSSSASLGSNTNSNSSISGQ. The span at 884–902 shows a compositional bias: polar residues; it reads ADQGQTNLTNSGITRQGGA. Low complexity predominate over residues 904–923; the sequence is VNGSQTSTTNNTRSSVSGGS. Over residues 928-956 the composition is skewed to polar residues; it reads LPTQSSQRSNTNSPLLASQPQGYSQQQKF. The segment covering 960–971 has biased composition (low complexity); it reads PPTSQSQSQSPT. Polar residues predominate over residues 976–994; sequence QLQTSKMYNKHGSNITPSN.

The protein belongs to the enhancer of polycomb family. Component of the NuA4 histone acetyltransferase complex.

Its subcellular location is the nucleus. Component of the NuA4 histone acetyltransferase complex which is involved in transcriptional activation of selected genes principally by acetylation of nucleosomal histone H4 and H2A. The NuA4 complex is also involved in DNA repair. Involved in gene silencing by neighboring heterochromatin, blockage of the silencing spreading along the chromosome, and required for cell cycle progression through G2/M. This chain is Enhancer of polycomb-like protein 1 (EPL1), found in Debaryomyces hansenii (strain ATCC 36239 / CBS 767 / BCRC 21394 / JCM 1990 / NBRC 0083 / IGC 2968) (Yeast).